A 471-amino-acid polypeptide reads, in one-letter code: 3-hydroxylaminophenol mutase (471 aa).

The GS beta-grasp domain occupies 15 to 100 (NDVKFVDFRF…TCDVVEPSDG (86 aa)). One can recognise a GS catalytic domain in the interval 107–471 (PRSIAKRAEA…PVEFEMYYSL (365 aa)).

Belongs to the glutamine synthetase family.

The catalysed reaction is 3-hydroxyaminophenol = aminohydroquinone. Its activity is regulated as follows. Is inhibited by H(2)O(2). 1,10-phenanthroline inhibits the activity slightly, but other metal cation chelators such as EDTA or tiron have no effect on the activity. Divalent metal cations and hydroxylamine have also no effect on the activity. Due to the relationship of the protein with glutamine synthetases, glutamate and glutamine were tested as inhibitors; neither preincubation of the compounds with the enzyme nor their addition to the assay buffer affected 3HAP mutase activity. In terms of biological role, catalyzes the isomerization of 3-hydroxylaminophenol (3HAP) to aminohydroquinone, a step in the degradative pathway of 3-nitrophenol. The enzymatic reaction is regiospecific since it leads to the formation of aminohydroquinone exclusively, without producing the isomeric 4-aminocatechol. Can also isomerize other hydroxylaminoaromatic compounds, such as hydroxylaminobenzene to a mixture of 2-aminophenol and 4-aminophenol, 4-hydroxylaminotoluene to 6-amino-m-cresol, and 2-chloro-5-hydroxylaminophenol to 2-amino-5-chlorohydroquinone. Does not act on 4-hydroxylaminobenzoate. The protein is 3-hydroxylaminophenol mutase of Cupriavidus pinatubonensis (strain JMP 134 / LMG 1197) (Cupriavidus necator (strain JMP 134)).